A 521-amino-acid polypeptide reads, in one-letter code: uncharacterized protein (521 aa).

Positions 1-22 (MGFKLKGFGFLTLFASQAFLTA) are cleaved as a signal peptide. Cys23 carries the N-palmitoyl cysteine lipid modification. Cys23 carries S-diacylglycerol cysteine lipidation.

It belongs to the MG067/MG068/MG395 family.

The protein localises to the cell membrane. This is an uncharacterized protein from Mycoplasma pneumoniae (strain ATCC 29342 / M129 / Subtype 1) (Mycoplasmoides pneumoniae).